Reading from the N-terminus, the 459-residue chain is Probable cysteine protease ATG4 (459 aa).

Residues 77-90 show a composition bias toward low complexity; the sequence is LPTTPSTTTLPYPL. The segment at 77 to 104 is disordered; sequence LPTTPSTTTLPYPLKAVPTTPPESSSSS. The active-site Nucleophile is C178. Active-site residues include D359 and H361.

Belongs to the peptidase C54 family.

Its subcellular location is the cytoplasm. The protein localises to the nucleus. The protein resides in the preautophagosomal structure. It carries out the reaction [protein]-C-terminal L-amino acid-glycyl-phosphatidylethanolamide + H2O = [protein]-C-terminal L-amino acid-glycine + a 1,2-diacyl-sn-glycero-3-phosphoethanolamine. Cysteine protease that plays a key role in cytoplasm to vacuole transport (Cvt) and autophagy by mediating both proteolytic activation and delipidation of ATG8. Required for selective autophagic degradation of the nucleus (nucleophagy) as well as for mitophagy which contributes to regulate mitochondrial quantity and quality by eliminating the mitochondria to a basal level to fulfill cellular energy requirements and preventing excess ROS production. The protease activity is required for proteolytic activation of ATG8: cleaves the C-terminal amino acid of ATG8 to reveal a C-terminal glycine. ATG8 ubiquitin-like activity requires the exposure of the glycine at the C-terminus for its conjugation to phosphatidylethanolamine (PE) and its insertion to membranes, which is necessary for autophagy. The ATG8-PE conjugate mediates tethering between adjacent membranes and stimulates membrane hemifusion, leading to expansion of the autophagosomal membrane during autophagy. In addition to the protease activity, also catalyzes deconjugation of PE-conjugated forms of ATG8 during macroautophagy: ATG8 delipidation is required to release the protein from membranes, which facilitates multiple events during macroautophagy, and especially for efficient autophagosome biogenesis, the assembly of ATG9-containing tubulovesicular clusters into phagophores/autophagosomes, and for the disassembly of PAS-associated ATG components. ATG8 delipidation by ATG4 also recycles ATG8-PE generated on inappropriate membranes to maintain a reservoir of unlipidated ATG8 that is required for autophagosome formation at the PAS. The chain is Probable cysteine protease ATG4 (ATG4) from Cryphonectria parasitica (Chestnut blight fungus).